Reading from the N-terminus, the 228-residue chain is Lipoprotein-releasing system ATP-binding protein LolD (228 aa).

Residues 9-228 enclose the ABC transporter domain; the sequence is LEAHDIQKNF…ELINGCLYRR (220 aa). Position 44–51 (44–51) interacts with ATP; that stretch reads GRSGEGKS.

The protein belongs to the ABC transporter superfamily. Lipoprotein translocase (TC 3.A.1.125) family. In terms of assembly, the complex is composed of two ATP-binding proteins (LolD) and two transmembrane proteins (LolC and LolE).

It is found in the cell inner membrane. In terms of biological role, part of the ABC transporter complex LolCDE involved in the translocation of mature outer membrane-directed lipoproteins, from the inner membrane to the periplasmic chaperone, LolA. Responsible for the formation of the LolA-lipoprotein complex in an ATP-dependent manner. The chain is Lipoprotein-releasing system ATP-binding protein LolD from Protochlamydia amoebophila (strain UWE25).